The primary structure comprises 252 residues: Protein BTG3 (252 aa).

Residues 138 to 162 (VTSDYHSGSSSSDEETSKEMEVKPS) are disordered.

The protein belongs to the BTG family. Ubiquitous. High expression in the ventricular zone of the developing central nervous system. High in ovary, testis, prostate, thymus and lung.

Functionally, overexpression impairs serum-induced cell cycle progression from the G0/G1 to S phase. In Homo sapiens (Human), this protein is Protein BTG3 (BTG3).